A 197-amino-acid polypeptide reads, in one-letter code: Shikimate kinase (197 aa).

26-31 contributes to the ATP binding site; it reads GSGKSR. S30 lines the Mg(2+) pocket. The substrate site is built by D48, R72, and G94. R132 serves as a coordination point for ATP. R150 serves as a coordination point for substrate.

It belongs to the shikimate kinase family. Monomer. It depends on Mg(2+) as a cofactor.

It is found in the cytoplasm. It carries out the reaction shikimate + ATP = 3-phosphoshikimate + ADP + H(+). It functions in the pathway metabolic intermediate biosynthesis; chorismate biosynthesis; chorismate from D-erythrose 4-phosphate and phosphoenolpyruvate: step 5/7. Functionally, catalyzes the specific phosphorylation of the 3-hydroxyl group of shikimic acid using ATP as a cosubstrate. The chain is Shikimate kinase from Prochlorococcus marinus (strain MIT 9211).